Consider the following 94-residue polypeptide: Small ribosomal subunit protein bS18 (94 aa).

The protein belongs to the bacterial ribosomal protein bS18 family. Part of the 30S ribosomal subunit. Forms a tight heterodimer with protein bS6.

In terms of biological role, binds as a heterodimer with protein bS6 to the central domain of the 16S rRNA, where it helps stabilize the platform of the 30S subunit. This Rickettsia bellii (strain OSU 85-389) protein is Small ribosomal subunit protein bS18.